Consider the following 503-residue polypeptide: Aromatase (503 aa).

Residues D309 and M374 each contribute to the substrate site. C437 lines the heme pocket.

The protein belongs to the cytochrome P450 family. Heme serves as cofactor.

It localises to the membrane. It carries out the reaction testosterone + 3 reduced [NADPH--hemoprotein reductase] + 3 O2 = 17beta-estradiol + formate + 3 oxidized [NADPH--hemoprotein reductase] + 4 H2O + 4 H(+). The enzyme catalyses androst-4-ene-3,17-dione + 3 reduced [NADPH--hemoprotein reductase] + 3 O2 = estrone + formate + 3 oxidized [NADPH--hemoprotein reductase] + 4 H2O + 4 H(+). Functionally, catalyzes the formation of aromatic C18 estrogens from C19 androgens. This is Aromatase (CYP19A1) from Callithrix jacchus (White-tufted-ear marmoset).